We begin with the raw amino-acid sequence, 553 residues long: Glutamate--tRNA ligase (553 aa).

The short motif at 41-51 (PSPTGFQHIGG) is the 'HIGH' region element. The 'KMSKS' region signature appears at 293–297 (KLSKR). Residue Lys296 participates in ATP binding.

The protein belongs to the class-I aminoacyl-tRNA synthetase family. Glutamate--tRNA ligase type 1 subfamily. In terms of assembly, monomer.

The protein resides in the cytoplasm. It carries out the reaction tRNA(Glu) + L-glutamate + ATP = L-glutamyl-tRNA(Glu) + AMP + diphosphate. Catalyzes the attachment of glutamate to tRNA(Glu) in a two-step reaction: glutamate is first activated by ATP to form Glu-AMP and then transferred to the acceptor end of tRNA(Glu). This is Glutamate--tRNA ligase from Clostridium beijerinckii (strain ATCC 51743 / NCIMB 8052) (Clostridium acetobutylicum).